Here is a 152-residue protein sequence, read N- to C-terminus: MSTLVTCSLPGAVTTHASTRRFGGSQFQTSQASCISFKREVSAKAVLRSVRCNATQTQSAQRKSSTATVKRSDPKGKTQGPKLDDGSGGFPPFRFGKGGGGGGGGGGGSNYFGGFLLFTCVLLLDYLKEFEKNLIARRQRAGYDANNDMFQQ.

Residues 1 to 52 (MSTLVTCSLPGAVTTHASTRRFGGSQFQTSQASCISFKREVSAKAVLRSVRC) constitute a mitochondrion transit peptide. The span at 52-69 (CNATQTQSAQRKSSTATV) shows a compositional bias: polar residues. The segment at 52-101 (CNATQTQSAQRKSSTATVKRSDPKGKTQGPKLDDGSGGFPPFRFGKGGGG) is disordered.

It is found in the mitochondrion. Non-functional allele of the RF2 fertility restorer of rice varieties with LD-type cytoplasmic male sterility (CMS). Non-functional RF2 alleles are found in japonica cultivars Taichung 65 and Nipponbare (AC F1SZ44), and is due to the presence of Thr-78 which replaces Ile-78 in the functional allele. Functional allele is found in the japonica cultivars Fukuyama and Owarihatamochi (AC F1SZ42), and indica cultivar Kasalath (AC F1SZ41). This Oryza sativa subsp. japonica (Rice) protein is Protein FERTILITY RESTORER RF2, mitochondrial.